Reading from the N-terminus, the 178-residue chain is Large ribosomal subunit protein uL6 (178 aa).

The protein belongs to the universal ribosomal protein uL6 family. Part of the 50S ribosomal subunit.

Its function is as follows. This protein binds to the 23S rRNA, and is important in its secondary structure. It is located near the subunit interface in the base of the L7/L12 stalk, and near the tRNA binding site of the peptidyltransferase center. This chain is Large ribosomal subunit protein uL6, found in Nitrosococcus oceani (strain ATCC 19707 / BCRC 17464 / JCM 30415 / NCIMB 11848 / C-107).